A 235-amino-acid polypeptide reads, in one-letter code: Ubiquinone biosynthesis O-methyltransferase (235 aa).

S-adenosyl-L-methionine-binding residues include Arg-39, Gly-59, Asp-80, and Met-124.

The protein belongs to the methyltransferase superfamily. UbiG/COQ3 family.

It carries out the reaction a 3-demethylubiquinol + S-adenosyl-L-methionine = a ubiquinol + S-adenosyl-L-homocysteine + H(+). It catalyses the reaction a 3-(all-trans-polyprenyl)benzene-1,2-diol + S-adenosyl-L-methionine = a 2-methoxy-6-(all-trans-polyprenyl)phenol + S-adenosyl-L-homocysteine + H(+). It participates in cofactor biosynthesis; ubiquinone biosynthesis. Functionally, O-methyltransferase that catalyzes the 2 O-methylation steps in the ubiquinone biosynthetic pathway. The sequence is that of Ubiquinone biosynthesis O-methyltransferase from Vibrio parahaemolyticus serotype O3:K6 (strain RIMD 2210633).